The primary structure comprises 246 residues: Large ribosomal subunit protein uL30 (246 aa).

This sequence belongs to the universal ribosomal protein uL30 family.

In terms of biological role, binds to G-rich structures in 28S rRNA and in mRNAs. Plays a regulatory role in the translation apparatus; inhibits cell-free translation of mRNAs. This chain is Large ribosomal subunit protein uL30 (rpl7), found in Dictyostelium discoideum (Social amoeba).